Here is a 257-residue protein sequence, read N- to C-terminus: Small ribosomal subunit protein uS2 (257 aa).

The interval 237 to 257 (MDEADGSEAEPEDPAAPESAE) is disordered. A compositionally biased stretch (acidic residues) spans 240-257 (ADGSEAEPEDPAAPESAE).

This sequence belongs to the universal ribosomal protein uS2 family.

The polypeptide is Small ribosomal subunit protein uS2 (Chlorobium phaeovibrioides (strain DSM 265 / 1930) (Prosthecochloris vibrioformis (strain DSM 265))).